The primary structure comprises 159 residues: Ribosomal RNA large subunit methyltransferase H (159 aa).

Residues Leu76, Gly107, and 126-131 each bind S-adenosyl-L-methionine; that span reads ISSLTL.

The protein belongs to the RNA methyltransferase RlmH family. As to quaternary structure, homodimer.

The protein localises to the cytoplasm. The catalysed reaction is pseudouridine(1915) in 23S rRNA + S-adenosyl-L-methionine = N(3)-methylpseudouridine(1915) in 23S rRNA + S-adenosyl-L-homocysteine + H(+). In terms of biological role, specifically methylates the pseudouridine at position 1915 (m3Psi1915) in 23S rRNA. The chain is Ribosomal RNA large subunit methyltransferase H from Cupriavidus metallidurans (strain ATCC 43123 / DSM 2839 / NBRC 102507 / CH34) (Ralstonia metallidurans).